A 367-amino-acid polypeptide reads, in one-letter code: MSIRLIAVLSAASIAVTSATPVADSSCTISSFDQVASVLAECTDIVVSNLEVPAGETLNLETKKKGVTITFEGKTTFAYKEWTGPLLRVKGKAITVVGAKGSVLDGQGQLYWDGKGGNGGIKKPKFFKIKATEGSHFKNINLLNCPVQVHSIDHSGPLTLSGWNIDVSQGDKDALGHNTDGFDINTTDQLTIEDTVVKNQDDCIAVNQGTNFLFNNLDCSGGHGLSLSVGTSHEIIKNTVRNVTFSNSVVRKSRNGIHIKTTYQFRGRYPWRMLTYSNIAMEGIWKYAVNVEQDYKKGKPTGIPVGNIPIKGLHLEKVTGTLTGEESTPVYIICADGACSNFNWSGVSFEGASHASNCSYVPTGYSC.

The first 19 residues, 1-19, serve as a signal peptide directing secretion; that stretch reads MSIRLIAVLSAASIAVTSA. C27 and C42 form a disulfide bridge. An N-linked (GlcNAc...) asparagine glycan is attached at N185. One copy of the PbH1 1 repeat lies at 187-208; the sequence is TDQLTIEDTVVKNQDDCIAVNQ. D201 acts as the Proton donor in catalysis. C203 and C219 are disulfide-bonded. The active site involves H223. Residues 240–261 form a PbH1 2 repeat; that stretch reads VRNVTFSNSVVRKSRNGIHIKT. N242 carries an N-linked (GlcNAc...) asparagine glycan. C334 and C339 are disulfide-bonded. 2 N-linked (GlcNAc...) asparagine glycosylation sites follow: N343 and N357. A disulfide bridge links C358 with C367.

The protein belongs to the glycosyl hydrolase 28 family. Expressed in larval carcasses and gut, and adult gut.

It is found in the secreted. The protein localises to the cell wall. The enzyme catalyses (1,4-alpha-D-galacturonosyl)n+m + H2O = (1,4-alpha-D-galacturonosyl)n + (1,4-alpha-D-galacturonosyl)m.. The protein is Polygalacturonase of Phaedon cochleariae (Mustard beetle).